Here is a 155-residue protein sequence, read N- to C-terminus: Small ribosomal subunit protein uS7c (155 aa).

It belongs to the universal ribosomal protein uS7 family. Part of the 30S ribosomal subunit.

The protein resides in the plastid. It localises to the chloroplast. One of the primary rRNA binding proteins, it binds directly to 16S rRNA where it nucleates assembly of the head domain of the 30S subunit. This chain is Small ribosomal subunit protein uS7c (rps7), found in Pinus koraiensis (Korean pine).